Here is a 449-residue protein sequence, read N- to C-terminus: Malonyl-CoA:anthocyanidin 5-O-glucoside-6''-O-malonyltransferase (449 aa).

Position 1 is an N-acetylmethionine (methionine 1). Catalysis depends on proton acceptor residues histidine 162 and aspartate 394.

It belongs to the plant acyltransferase family. As to expression, expressed in flowers. Detected in leaves, stems, roots and siliques.

The catalysed reaction is anthocyanin A3 + malonyl-CoA = anthocyanin A5 + CoA. The enzyme catalyses anthocyanin A7 + malonyl-CoA = anthocyanin A9 + CoA. It carries out the reaction anthocyanin A6 + malonyl-CoA = anthocyanin A8 + CoA. It catalyses the reaction anthocyanin A10 + malonyl-CoA = anthocyanin A11 + CoA. Functionally, catalyzes the malonylation of the 5-O-glucose residue of anthocyanins, using malonyl-CoA as the malonyl donor. Acts only on anthocyanin substrates containing a 5-O-glucosyl moiety. Acts on the four native A.thaliana anthocyanins, A3, A7, and to a lesser extent, A6 and A10. Can also use the non-native anthocyanin compounds cyanin (cyanidin 3,5-diglucoside), malvin, pelargonidin 3,5-diglucoside, peonidin 3,5-diglucoside, cyanidin 3-coumaroylglucoside 5-glucoside, delphinidin 3-coumaroylrutinoside 5-glucoside and petunidin 3-coumaroylrutinoside 5-glucoside as substrates. Is the sole enzyme responsible for producing malonylated anthocyanin 5-O-glucosides in A.thaliana. Is not able to catalyze acyl transfer using acetyl-CoA, butyryl-CoA, hexanoyl-CoA, benzoyl-CoA, cinnamoyl-CoA, methylmalonyl-CoA, succinyl-CoA, p-coumaroyl-CoA or caffeoyl-CoA. This Arabidopsis thaliana (Mouse-ear cress) protein is Malonyl-CoA:anthocyanidin 5-O-glucoside-6''-O-malonyltransferase (5MAT).